The sequence spans 226 residues: Ribose-5-phosphate isomerase A (226 aa).

Substrate contacts are provided by residues 33–36, 86–89, and 99–102; these read TGST, DGAD, and KGGG. Glu-108 functions as the Proton acceptor in the catalytic mechanism. Lys-126 provides a ligand contact to substrate.

It belongs to the ribose 5-phosphate isomerase family. Homodimer.

It carries out the reaction aldehydo-D-ribose 5-phosphate = D-ribulose 5-phosphate. Its pathway is carbohydrate degradation; pentose phosphate pathway; D-ribose 5-phosphate from D-ribulose 5-phosphate (non-oxidative stage): step 1/1. In terms of biological role, catalyzes the reversible conversion of ribose-5-phosphate to ribulose 5-phosphate. In Bordetella bronchiseptica (strain ATCC BAA-588 / NCTC 13252 / RB50) (Alcaligenes bronchisepticus), this protein is Ribose-5-phosphate isomerase A.